The chain runs to 446 residues: Tubulin beta-5 chain (446 aa).

An MREI motif motif is present at residues M1–I4. Q11, E69, S138, G142, T143, G144, N204, and N226 together coordinate GTP. Mg(2+) is bound at residue E69. Residue E438 is modified to 5-glutamyl polyglutamate.

It belongs to the tubulin family. As to quaternary structure, dimer of alpha and beta chains. A typical microtubule is a hollow water-filled tube with an outer diameter of 25 nm and an inner diameter of 15 nM. Alpha-beta heterodimers associate head-to-tail to form protofilaments running lengthwise along the microtubule wall with the beta-tubulin subunit facing the microtubule plus end conferring a structural polarity. Microtubules usually have 13 protofilaments but different protofilament numbers can be found in some organisms and specialized cells. Mg(2+) is required as a cofactor. Post-translationally, some glutamate residues at the C-terminus are polyglycylated, resulting in polyglycine chains on the gamma-carboxyl group. Glycylation is mainly limited to tubulin incorporated into axonemes (cilia and flagella) whereas glutamylation is prevalent in neuronal cells, centrioles, axonemes, and the mitotic spindle. Both modifications can coexist on the same protein on adjacent residues, and lowering polyglycylation levels increases polyglutamylation, and reciprocally. The precise function of polyglycylation is still unclear. In terms of processing, some glutamate residues at the C-terminus are polyglutamylated, resulting in polyglutamate chains on the gamma-carboxyl group. Polyglutamylation plays a key role in microtubule severing by spastin (SPAST). SPAST preferentially recognizes and acts on microtubules decorated with short polyglutamate tails: severing activity by SPAST increases as the number of glutamates per tubulin rises from one to eight, but decreases beyond this glutamylation threshold.

The protein resides in the cytoplasm. It localises to the cytoskeleton. In terms of biological role, tubulin is the major constituent of microtubules, a cylinder consisting of laterally associated linear protofilaments composed of alpha- and beta-tubulin heterodimers. Microtubules grow by the addition of GTP-tubulin dimers to the microtubule end, where a stabilizing cap forms. Below the cap, tubulin dimers are in GDP-bound state, owing to GTPase activity of alpha-tubulin. The chain is Tubulin beta-5 chain from Gallus gallus (Chicken).